We begin with the raw amino-acid sequence, 420 residues long: Histidine--tRNA ligase (420 aa).

This sequence belongs to the class-II aminoacyl-tRNA synthetase family. As to quaternary structure, homodimer.

Its subcellular location is the cytoplasm. The catalysed reaction is tRNA(His) + L-histidine + ATP = L-histidyl-tRNA(His) + AMP + diphosphate + H(+). The polypeptide is Histidine--tRNA ligase (Mycobacterium marinum (strain ATCC BAA-535 / M)).